We begin with the raw amino-acid sequence, 293 residues long: ATP synthase subunit a (293 aa).

The next 8 helical transmembrane spans lie at 39 to 59, 73 to 93, 102 to 122, 128 to 148, 172 to 192, 198 to 218, 224 to 244, and 245 to 265; these read QVFG…VYWI, FVLL…DLIG, YFLM…LGGI, SLTF…IMGI, TLIP…SISL, ILGG…AFST, LALS…HVYF, and DVVV…NYWA.

Belongs to the ATPase A chain family. F-type ATPases have 2 components, CF(1) - the catalytic core - and CF(0) - the membrane proton channel. CF(1) has five subunits: alpha(3), beta(3), gamma(1), delta(1), epsilon(1). CF(0) has three main subunits: a(1), b(2) and c(9-12). The alpha and beta chains form an alternating ring which encloses part of the gamma chain. CF(1) is attached to CF(0) by a central stalk formed by the gamma and epsilon chains, while a peripheral stalk is formed by the delta and b chains.

The protein resides in the cell membrane. Key component of the proton channel; it plays a direct role in the translocation of protons across the membrane. In Mycoplasma pneumoniae (strain ATCC 29342 / M129 / Subtype 1) (Mycoplasmoides pneumoniae), this protein is ATP synthase subunit a.